Consider the following 619-residue polypeptide: MALLQIAEPGQSAAPHEHRLAVGIDLGTTNSLVAAVRSGEALTLADSEGRHSLPSVVHYGVDSTLVGHDAEALSALFPAQTLVSVKRFMGKSLSDIQAGMQEFPYEFSVSEQGLPLFVMPQGAVNPIQASADILRPLIERAEKTLGGQLQGVVITVPAYFDDAQRQGTKDAAELLGVKVLRLLNEPTAAAIAYGLDSKQEGVIAVYDLGGGTFDISVLRLSGGVFEVLATGGNSALGGDDFDHLLQQHLQAAWGLTSASAQLSRQLLIEARRVKEALTDNDTVTAHVSLDGSDLSLEISKADFEALIATLVKKTISSCRRTLRDAGISTDEVIETVMVGGSTRVPLVRQQVEQFFNKTPLTSIDPDRVVAIGAAIQADILVGNKPDSDLLLLDVIPLSLGIETMGGLVEKVIPRNTTIPVARAQEFTTFKDGQTAMAFHVVQGERELVDDCRSLARFTLTDIPALAAGAAHIRVTFQVDADGLLSVTAMEKSTGVNTSIQVKPSFGLSDLEIATMLKDSMKHAKDDISLRMLTEQKVEAMRVIESLQAALNNDGDLLELSERESLQAALANLGEIAKGNDRDAIEQAIKALDDKTQDFASLRMDNSIKAALKGQSIDNI.

The protein belongs to the heat shock protein 70 family.

Functionally, chaperone involved in the maturation of iron-sulfur cluster-containing proteins. Has a low intrinsic ATPase activity which is markedly stimulated by HscB. The chain is Chaperone protein HscA homolog from Shewanella denitrificans (strain OS217 / ATCC BAA-1090 / DSM 15013).